We begin with the raw amino-acid sequence, 375 residues long: Putative nuclease YhcG (375 aa).

Interacts with DNA processing enzymes, including the restriction complex HsdMRS, the integrases IntF and IntS, and the recombinase PinE.

Its function is as follows. May be a nuclease involved in DNA recombination and repair. This is Putative nuclease YhcG (yhcG) from Escherichia coli (strain K12).